A 148-amino-acid polypeptide reads, in one-letter code: NADH-quinone oxidoreductase subunit C (148 aa).

The protein belongs to the complex I 30 kDa subunit family. As to quaternary structure, NDH-1 is composed of 14 different subunits. Subunits NuoB, C, D, E, F, and G constitute the peripheral sector of the complex.

It is found in the cell membrane. The catalysed reaction is a quinone + NADH + 5 H(+)(in) = a quinol + NAD(+) + 4 H(+)(out). Functionally, NDH-1 shuttles electrons from NADH, via FMN and iron-sulfur (Fe-S) centers, to quinones in the respiratory chain. The immediate electron acceptor for the enzyme in this species is believed to be a menaquinone. Couples the redox reaction to proton translocation (for every two electrons transferred, four hydrogen ions are translocated across the cytoplasmic membrane), and thus conserves the redox energy in a proton gradient. The polypeptide is NADH-quinone oxidoreductase subunit C (Moorella thermoacetica (strain ATCC 39073 / JCM 9320)).